We begin with the raw amino-acid sequence, 129 residues long: uncharacterized protein (129 aa).

Residues 84–98 show a composition bias toward basic residues; the sequence is QKTVSKKYKSRKGRR. The interval 84–129 is disordered; the sequence is QKTVSKKYKSRKGRRYTRERNISSEKNKTDKSHKVRVGKIQNINND. The span at 99–115 shows a compositional bias: basic and acidic residues; it reads YTRERNISSEKNKTDKS.

This is an uncharacterized protein from Acanthamoeba polyphaga mimivirus (APMV).